The primary structure comprises 554 residues: Arginine--tRNA ligase (554 aa).

Positions 132-142 match the 'HIGH' region motif; the sequence is ANPTGPIHLGG.

The protein belongs to the class-I aminoacyl-tRNA synthetase family. Monomer.

The protein resides in the cytoplasm. The catalysed reaction is tRNA(Arg) + L-arginine + ATP = L-arginyl-tRNA(Arg) + AMP + diphosphate. This Clavibacter sepedonicus (Clavibacter michiganensis subsp. sepedonicus) protein is Arginine--tRNA ligase.